We begin with the raw amino-acid sequence, 281 residues long: MTDPAPPPTALAAAKARMRELAASYGAGLPGRDTHSLMHGLDGITLTFMPMGQRDGAYDPEHHVILINSQVRPERQRFTLAHEISHALLLGDDDLLSDLHDEYEGDRLEQVIETLCNVGAAALLMPAELIDDLLTRFGPTGRALAELARRADVSATSALYALAERTAPPVIYAVCALSRQEDEGEGGGAKELTVRASSASAGVKYSLSAGTPVPDDHPAALALDTRLPLAQDSYVPFRSGRRMPAYVDAFPERQRVLVSFALPAGRSEPDADKPEAPGDQS.

Histidine 82 is a Zn(2+) binding site. The active site involves glutamate 83. Zn(2+) contacts are provided by histidine 86 and glutamate 113. The disordered stretch occupies residues 262 to 281 (LPAGRSEPDADKPEAPGDQS). The segment covering 267–281 (SEPDADKPEAPGDQS) has biased composition (basic and acidic residues).

As to quaternary structure, interacts with DdrOC.

Protease activity is inhibited by EDTA. Functionally, plays a central regulatory role in DNA repair and protection pathways in response to radiation stress. Acts as a site-specific metalloprotease that cleaves and inactivates the repressor proteins DdrOC and DdrOP3, resulting in induced expression of genes required for DNA repair and cell survival after exposure to radiation. This Deinococcus deserti (strain DSM 17065 / CIP 109153 / LMG 22923 / VCD115) protein is Radiation response metalloprotease IrrE.